Here is a 169-residue protein sequence, read N- to C-terminus: Photosystem I assembly protein Ycf3 (169 aa).

TPR repeat units follow at residues 35–68 (AFTY…EIDP), 72–105 (SYIL…NPSL), and 120–153 (GEQA…APGN).

It belongs to the Ycf3 family.

The protein localises to the plastid. The protein resides in the chloroplast thylakoid membrane. Essential for the assembly of the photosystem I (PSI) complex. May act as a chaperone-like factor to guide the assembly of the PSI subunits. The sequence is that of Photosystem I assembly protein Ycf3 from Huperzia lucidula (Shining clubmoss).